Consider the following 444-residue polypeptide: Methionine aminopeptidase 2-1 (444 aa).

The tract at residues 1 to 92 (MAAQVTEKLQ…VPVSNLFPNN (92 aa)) is disordered. The segment covering 15-29 (NGQNGDAKANSTAVG) has biased composition (polar residues). Residues 34–45 (GEAEDDSDDEKE) show a composition bias toward acidic residues. The segment covering 59 to 73 (AKKKKRKSKKKKKGG) has biased composition (basic residues). Histidine 197 provides a ligand contact to substrate. Positions 217, 228, and 297 each coordinate a divalent metal cation. Histidine 305 contributes to the substrate binding site. A divalent metal cation contacts are provided by glutamate 330 and glutamate 425.

This sequence belongs to the peptidase M24A family. Methionine aminopeptidase eukaryotic type 2 subfamily. Co(2+) serves as cofactor. It depends on Zn(2+) as a cofactor. The cofactor is Mn(2+). Fe(2+) is required as a cofactor.

It localises to the cytoplasm. The enzyme catalyses Release of N-terminal amino acids, preferentially methionine, from peptides and arylamides.. Cotranslationally removes the N-terminal methionine from nascent proteins. The N-terminal methionine is often cleaved when the second residue in the primary sequence is small and uncharged (Met-Ala-, Cys, Gly, Pro, Ser, Thr, or Val). The protein is Methionine aminopeptidase 2-1 of Neosartorya fischeri (strain ATCC 1020 / DSM 3700 / CBS 544.65 / FGSC A1164 / JCM 1740 / NRRL 181 / WB 181) (Aspergillus fischerianus).